The sequence spans 388 residues: Pectin acetylesterase 1 (388 aa).

The signal sequence occupies residues 1 to 24 (MKTLLYWGWSSLAGLILFSILAHG). N-linked (GlcNAc...) asparagine glycosylation is found at asparagine 30 and asparagine 33. Active-site charge relay system residues include serine 187 and aspartate 283. Asparagine 304 carries N-linked (GlcNAc...) asparagine glycosylation. The active-site Charge relay system is the histidine 349.

Belongs to the pectinacetylesterase family.

The protein localises to the secreted. It localises to the cell wall. In terms of biological role, hydrolyzes acetyl esters in homogalacturonan regions of pectin. In type I primary cell wall, galacturonic acid residues of pectin can be acetylated at the O-2 and O-3 positions. Decreasing the degree of acetylation of pectin gels in vitro alters their physical properties. This chain is Pectin acetylesterase 1, found in Arabidopsis thaliana (Mouse-ear cress).